Reading from the N-terminus, the 210-residue chain is MSPGILGKKIGMTQIFRPDGQVVPVTLLKAGPCMVVQRKTPSTDGYDAVQLGLVEFIKPQRINKPTAGRLKKAGVEGAKFMREFTLGPGSDDLKTGDQVLVDQFKPKDKVDVVGISKGKGFAGVVKRHHFRGGEGSHGSMFHRAPGSIGASSFPSRVVPGMRMGGHLGNAQVTVRNLEVIDVDTEDNVLVVKGAVPGPNGGYVLVRRSKR.

The protein belongs to the universal ribosomal protein uL3 family. In terms of assembly, part of the 50S ribosomal subunit. Forms a cluster with proteins L14 and L19.

Its function is as follows. One of the primary rRNA binding proteins, it binds directly near the 3'-end of the 23S rRNA, where it nucleates assembly of the 50S subunit. The protein is Large ribosomal subunit protein uL3 of Solibacter usitatus (strain Ellin6076).